Here is a 253-residue protein sequence, read N- to C-terminus: Sulfate transporter CysZ (253 aa).

The next 4 membrane-spanning stretches (helical) occupy residues 31–51, 72–92, 151–171, and 222–242; these read FVIL…WWLF, LSYL…GYFF, IVLL…PVLW, and IPVL…AMWV.

This sequence belongs to the CysZ family.

The protein resides in the cell inner membrane. High affinity, high specificity proton-dependent sulfate transporter, which mediates sulfate uptake. Provides the sulfur source for the cysteine synthesis pathway. This chain is Sulfate transporter CysZ, found in Salmonella paratyphi A (strain AKU_12601).